The chain runs to 281 residues: NADPH-dependent 7-cyano-7-deazaguanine reductase (281 aa).

87–89 contacts substrate; it reads VES. Residue 89–90 coordinates NADPH; that stretch reads SK. Cys-188 acts as the Thioimide intermediate in catalysis. Asp-195 serves as the catalytic Proton donor. 227–228 serves as a coordination point for substrate; sequence HE. NADPH is bound at residue 256–257; that stretch reads RG.

It belongs to the GTP cyclohydrolase I family. QueF type 2 subfamily. As to quaternary structure, homodimer.

Its subcellular location is the cytoplasm. It catalyses the reaction 7-aminomethyl-7-carbaguanine + 2 NADP(+) = 7-cyano-7-deazaguanine + 2 NADPH + 3 H(+). It functions in the pathway tRNA modification; tRNA-queuosine biosynthesis. Functionally, catalyzes the NADPH-dependent reduction of 7-cyano-7-deazaguanine (preQ0) to 7-aminomethyl-7-deazaguanine (preQ1). This chain is NADPH-dependent 7-cyano-7-deazaguanine reductase, found in Aliivibrio fischeri (strain MJ11) (Vibrio fischeri).